A 785-amino-acid polypeptide reads, in one-letter code: Protein SEY1 (785 aa).

The Cytoplasmic portion of the chain corresponds to 1-690 (MTDLEVSAIQ…KRSVINSKTE (690 aa)). In terms of domain architecture, GB1/RHD3-type G spans 40-266 (GLNYHIVSVF…SEDQLFNEGY (227 aa)). A GTP-binding site is contributed by 50-57 (GSQSTGKS). The stretch at 451 to 479 (PKLRELEEELSNLRTELVNKEQENIKTKI) forms a coiled coil. The helical transmembrane segment at 691–711 (VPLYIYALLLVLGWNEFMIIL) threads the bilayer. Residues 712–714 (RNP) are Lumenal-facing. The chain crosses the membrane as a helical span at residues 715-735 (LLITLLLIGLTGLYLGYKTKL). Residues 736–785 (LGPIVQVVQAMIQELQDQAKNKLRDVLVSEPEAPSQVRIGKEVDATKDED) lie on the Cytoplasmic side of the membrane.

The protein belongs to the TRAFAC class dynamin-like GTPase superfamily. GB1/RHD3 GTPase family. RHD3 subfamily.

It localises to the endoplasmic reticulum membrane. Functionally, cooperates with the reticulon proteins and tubule-shaping DP1 family proteins to generate and maintain the structure of the tubular endoplasmic reticulum network. Has GTPase activity, which is required for its function in ER organization. In Komagataella phaffii (strain GS115 / ATCC 20864) (Yeast), this protein is Protein SEY1.